Here is a 121-residue protein sequence, read N- to C-terminus: Large ribosomal subunit protein bL12 (121 aa).

This sequence belongs to the bacterial ribosomal protein bL12 family. In terms of assembly, homodimer. Part of the ribosomal stalk of the 50S ribosomal subunit. Forms a multimeric L10(L12)X complex, where L10 forms an elongated spine to which 2 to 4 L12 dimers bind in a sequential fashion. Binds GTP-bound translation factors.

Its function is as follows. Forms part of the ribosomal stalk which helps the ribosome interact with GTP-bound translation factors. Is thus essential for accurate translation. The chain is Large ribosomal subunit protein bL12 from Lachnospira eligens (strain ATCC 27750 / DSM 3376 / VPI C15-48 / C15-B4) (Eubacterium eligens).